A 169-amino-acid chain; its full sequence is Ribosome maturation factor RimM (169 aa).

In terms of domain architecture, PRC barrel spans 93-167 (PENSFFISDI…KISVILPKGL (75 aa)).

Belongs to the RimM family. Binds ribosomal protein uS19.

It localises to the cytoplasm. Its function is as follows. An accessory protein needed during the final step in the assembly of 30S ribosomal subunit, possibly for assembly of the head region. Essential for efficient processing of 16S rRNA. May be needed both before and after RbfA during the maturation of 16S rRNA. It has affinity for free ribosomal 30S subunits but not for 70S ribosomes. This Ruminiclostridium cellulolyticum (strain ATCC 35319 / DSM 5812 / JCM 6584 / H10) (Clostridium cellulolyticum) protein is Ribosome maturation factor RimM.